Consider the following 338-residue polypeptide: tRNA N6-adenosine threonylcarbamoyltransferase (338 aa).

Fe cation is bound by residues H111 and H115. Substrate-binding positions include 133-137, D166, G179, D183, and N275; that span reads LVSGG. Residue D300 participates in Fe cation binding.

Belongs to the KAE1 / TsaD family. The cofactor is Fe(2+).

The protein localises to the cytoplasm. The catalysed reaction is L-threonylcarbamoyladenylate + adenosine(37) in tRNA = N(6)-L-threonylcarbamoyladenosine(37) in tRNA + AMP + H(+). Its function is as follows. Required for the formation of a threonylcarbamoyl group on adenosine at position 37 (t(6)A37) in tRNAs that read codons beginning with adenine. Is involved in the transfer of the threonylcarbamoyl moiety of threonylcarbamoyl-AMP (TC-AMP) to the N6 group of A37, together with TsaE and TsaB. TsaD likely plays a direct catalytic role in this reaction. In Treponema denticola (strain ATCC 35405 / DSM 14222 / CIP 103919 / JCM 8153 / KCTC 15104), this protein is tRNA N6-adenosine threonylcarbamoyltransferase.